Here is a 98-residue protein sequence, read N- to C-terminus: DNA-binding protein Fis (98 aa).

Positions 74–93 form a DNA-binding region, H-T-H motif; sequence QTRAALMMGINRGTLRKKLK.

The protein belongs to the transcriptional regulatory Fis family. As to quaternary structure, homodimer.

Functionally, activates ribosomal RNA transcription. Plays a direct role in upstream activation of rRNA promoters. This Photorhabdus laumondii subsp. laumondii (strain DSM 15139 / CIP 105565 / TT01) (Photorhabdus luminescens subsp. laumondii) protein is DNA-binding protein Fis.